Consider the following 419-residue polypeptide: Serine hydroxymethyltransferase (419 aa).

(6S)-5,6,7,8-tetrahydrofolate contacts are provided by residues Leu121 and 125–127; that span reads GHL. Lys229 carries the post-translational modification N6-(pyridoxal phosphate)lysine. 354-356 provides a ligand contact to (6S)-5,6,7,8-tetrahydrofolate; it reads SPF.

This sequence belongs to the SHMT family. As to quaternary structure, homodimer. Pyridoxal 5'-phosphate is required as a cofactor.

It is found in the cytoplasm. The catalysed reaction is (6R)-5,10-methylene-5,6,7,8-tetrahydrofolate + glycine + H2O = (6S)-5,6,7,8-tetrahydrofolate + L-serine. The protein operates within one-carbon metabolism; tetrahydrofolate interconversion. It participates in amino-acid biosynthesis; glycine biosynthesis; glycine from L-serine: step 1/1. Functionally, catalyzes the reversible interconversion of serine and glycine with tetrahydrofolate (THF) serving as the one-carbon carrier. This reaction serves as the major source of one-carbon groups required for the biosynthesis of purines, thymidylate, methionine, and other important biomolecules. Also exhibits THF-independent aldolase activity toward beta-hydroxyamino acids, producing glycine and aldehydes, via a retro-aldol mechanism. This chain is Serine hydroxymethyltransferase, found in Coxiella burnetii (strain CbuG_Q212) (Coxiella burnetii (strain Q212)).